The chain runs to 113 residues: UPF0342 protein spyM18_0873 (113 aa).

It belongs to the UPF0342 family.

The polypeptide is UPF0342 protein spyM18_0873 (Streptococcus pyogenes serotype M18 (strain MGAS8232)).